The chain runs to 21 residues: Cold shock protein CspSt (21 aa).

One can recognise a CSD domain in the interval 1–21 (KNGTVKWFNAEKGFGFITSED).

The protein resides in the cytoplasm. In Streptococcus thermophilus, this protein is Cold shock protein CspSt.